The primary structure comprises 565 residues: Protein nucleotidyltransferase YdiU (565 aa).

ATP contacts are provided by Gly-118, Gly-120, Arg-121, Lys-141, Asp-153, Gly-154, Arg-211, and Arg-218. The active-site Proton acceptor is the Asp-290. Residues Asn-291 and Asp-300 each coordinate Mg(2+). Asp-300 contacts ATP.

It belongs to the SELO family. The cofactor is Mg(2+). Requires Mn(2+) as cofactor.

The catalysed reaction is L-seryl-[protein] + ATP = 3-O-(5'-adenylyl)-L-seryl-[protein] + diphosphate. It carries out the reaction L-threonyl-[protein] + ATP = 3-O-(5'-adenylyl)-L-threonyl-[protein] + diphosphate. The enzyme catalyses L-tyrosyl-[protein] + ATP = O-(5'-adenylyl)-L-tyrosyl-[protein] + diphosphate. It catalyses the reaction L-histidyl-[protein] + UTP = N(tele)-(5'-uridylyl)-L-histidyl-[protein] + diphosphate. The catalysed reaction is L-seryl-[protein] + UTP = O-(5'-uridylyl)-L-seryl-[protein] + diphosphate. It carries out the reaction L-tyrosyl-[protein] + UTP = O-(5'-uridylyl)-L-tyrosyl-[protein] + diphosphate. In terms of biological role, nucleotidyltransferase involved in the post-translational modification of proteins. It can catalyze the addition of adenosine monophosphate (AMP) or uridine monophosphate (UMP) to a protein, resulting in modifications known as AMPylation and UMPylation. This chain is Protein nucleotidyltransferase YdiU, found in Nitrosospira multiformis (strain ATCC 25196 / NCIMB 11849 / C 71).